The sequence spans 448 residues: Probable cytosolic Fe-S cluster assembly factor Bm6838 (448 aa).

[4Fe-4S] cluster-binding residues include C27, C66, C69, C72, C170, C226, C370, and C374.

This sequence belongs to the NARF family.

Functionally, component of the cytosolic iron-sulfur (Fe/S) protein assembly machinery. Required for maturation of extramitochondrial Fe/S proteins. The protein is Probable cytosolic Fe-S cluster assembly factor Bm6838 of Brugia malayi (Filarial nematode worm).